Reading from the N-terminus, the 970-residue chain is UvrABC system protein A (970 aa).

34-41 serves as a coordination point for ATP; the sequence is GVSGSGKS. A C4-type zinc finger spans residues 284–311; the sequence is CPEHGAVMDELSPRLFSFNSPYGACPDC. ABC transporter domains are found at residues 340 to 617 and 637 to 965; these read WSEK…QRSL and GNGA…KYLA. An ATP-binding site is contributed by 669-676; it reads GVSGSGKS. A C4-type zinc finger spans residues 768–794; sequence CEACAGQGVNVIEMNFLPDVYVQCDVC.

It belongs to the ABC transporter superfamily. UvrA family. In terms of assembly, forms a heterotetramer with UvrB during the search for lesions.

The protein resides in the cytoplasm. Functionally, the UvrABC repair system catalyzes the recognition and processing of DNA lesions. UvrA is an ATPase and a DNA-binding protein. A damage recognition complex composed of 2 UvrA and 2 UvrB subunits scans DNA for abnormalities. When the presence of a lesion has been verified by UvrB, the UvrA molecules dissociate. This is UvrABC system protein A from Synechocystis sp. (strain ATCC 27184 / PCC 6803 / Kazusa).